A 241-amino-acid polypeptide reads, in one-letter code: Small ribosomal subunit protein uS2 (241 aa).

This sequence belongs to the universal ribosomal protein uS2 family.

This is Small ribosomal subunit protein uS2 from Hamiltonella defensa subsp. Acyrthosiphon pisum (strain 5AT).